A 498-amino-acid polypeptide reads, in one-letter code: Elastase (498 aa).

The first 23 residues, 1–23, serve as a signal peptide directing secretion; that stretch reads MKKVSTLDLLFVAIMGVSPAAFA. The propeptide occupies 24-197; it reads ADLIDVSKLP…VLDQWEGLAH (174 aa). A disulfide bridge connects residues Cys-227 and Cys-255. Asp-333 provides a ligand contact to Ca(2+). His-337 contributes to the Zn(2+) binding site. Glu-338 is a catalytic residue. Zn(2+)-binding residues include His-341 and Glu-361. Positions 369, 372, 380, and 382 each coordinate Ca(2+). The Proton donor role is filled by His-420. Cys-467 and Cys-494 are disulfide-bonded.

It belongs to the peptidase M4 family. Monomer. It depends on Ca(2+) as a cofactor. The cofactor is Zn(2+). Post-translationally, made as a membrane-associated pre-pro-protein, which is exported to the periplasm (yielding pro-elastase) with removal of the signal peptide. Under certain conditions pro-elastase can accumulate. The pro-peptide is removed in the periplasm yielding a (mature length) 33 kDa protein, probably by autocatalysis. The pro-peptide probably remains associated with elastase and can be secreted. Further alterations (perhaps processing) seems to be required before secretion into the extracellular space.

It is found in the secreted. The catalysed reaction is Hydrolysis of proteins including elastin, collagen types III and IV, fibronectin and immunoglobulin A, generally with bulky hydrophobic group at P1'. Insulin B chain cleavage pattern identical to that of thermolysin, but specificity differs in other respects.. With respect to regulation, inhibited by phosphoramidon. Functionally, cleaves host elastin, collagen, IgG, and several complement components as well as endogenous pro-aminopeptidase. Autocatalyses processing of its pro-peptide. Processes the pro-peptide of pro-chitin-binding protein (cbpD). Involved in the pathogenesis of P.aeruginosa infections. The sequence is that of Elastase (lasB) from Pseudomonas aeruginosa (strain ATCC 15692 / DSM 22644 / CIP 104116 / JCM 14847 / LMG 12228 / 1C / PRS 101 / PAO1).